A 111-amino-acid chain; its full sequence is Large ribosomal subunit protein uL22 (111 aa).

It belongs to the universal ribosomal protein uL22 family. In terms of assembly, part of the 50S ribosomal subunit.

Its function is as follows. This protein binds specifically to 23S rRNA; its binding is stimulated by other ribosomal proteins, e.g. L4, L17, and L20. It is important during the early stages of 50S assembly. It makes multiple contacts with different domains of the 23S rRNA in the assembled 50S subunit and ribosome. In terms of biological role, the globular domain of the protein is located near the polypeptide exit tunnel on the outside of the subunit, while an extended beta-hairpin is found that lines the wall of the exit tunnel in the center of the 70S ribosome. The sequence is that of Large ribosomal subunit protein uL22 from Stenotrophomonas maltophilia (strain R551-3).